The chain runs to 859 residues: Heat shock protein 105 kDa (859 aa).

Ser2 carries the N-acetylserine modification. An N6-acetyllysine modification is found at Lys471. Phosphoserine is present on residues Ser509 and Ser510. 2 disordered regions span residues 515–585 (MDCQ…PPEA) and 797–859 (CEPV…MDLD). A compositionally biased stretch (polar residues) spans 533–555 (QQDNNEAGTQPQVQTDGHQTSQS). The residue at position 558 (Ser558) is a Phosphoserine. Thr562 is modified (phosphothreonine). Composition is skewed to basic and acidic residues over residues 564-585 (EENK…PPEA) and 806-815 (PKIESPKLER). At Ser810 the chain carries Phosphoserine. Thr816 is modified (phosphothreonine). Over residues 822–831 (TDKKEEDLDG) the composition is skewed to basic and acidic residues. The span at 850-859 (EKSSINMDLD) shows a compositional bias: polar residues.

The protein belongs to the heat shock protein 70 family. In terms of assembly, interacts with HSPA8/HSC70. Interacts with HSPA1A (via NBD) and HSPA1B (via NBD). In terms of processing, phosphorylation on Ser-509 may be important for regulation of the HSPA8/HSC70 chaperone activity.

It is found in the cytoplasm. In terms of biological role, acts as a nucleotide-exchange factor (NEF) for chaperone proteins HSPA1A and HSPA1B, promoting the release of ADP from HSPA1A/B thereby triggering substrate release. Prevents the aggregation of denatured proteins in cells under severe stress, on which the ATP levels decrease markedly. Inhibits HSPA8/HSC70 ATPase and chaperone activities. The polypeptide is Heat shock protein 105 kDa (HSPH1) (Bos taurus (Bovine)).